The chain runs to 312 residues: Thioredoxin reductase (312 aa).

E33–Q43 contacts FAD. C138 and C141 are joined by a disulfide. Residue D283–A292 coordinates FAD.

It belongs to the class-II pyridine nucleotide-disulfide oxidoreductase family. In terms of assembly, homodimer. FAD is required as a cofactor.

It localises to the cytoplasm. The catalysed reaction is [thioredoxin]-dithiol + NADP(+) = [thioredoxin]-disulfide + NADPH + H(+). This Chlamydia trachomatis serovar D (strain ATCC VR-885 / DSM 19411 / UW-3/Cx) protein is Thioredoxin reductase (trxB).